The following is a 234-amino-acid chain: Phosphoribosylaminoimidazole-succinocarboxamide synthase (234 aa).

The protein belongs to the SAICAR synthetase family.

It catalyses the reaction 5-amino-1-(5-phospho-D-ribosyl)imidazole-4-carboxylate + L-aspartate + ATP = (2S)-2-[5-amino-1-(5-phospho-beta-D-ribosyl)imidazole-4-carboxamido]succinate + ADP + phosphate + 2 H(+). Its pathway is purine metabolism; IMP biosynthesis via de novo pathway; 5-amino-1-(5-phospho-D-ribosyl)imidazole-4-carboxamide from 5-amino-1-(5-phospho-D-ribosyl)imidazole-4-carboxylate: step 1/2. In Streptococcus agalactiae serotype V (strain ATCC BAA-611 / 2603 V/R), this protein is Phosphoribosylaminoimidazole-succinocarboxamide synthase.